Consider the following 317-residue polypeptide: L-lactate dehydrogenase 1 (317 aa).

Residues valine 17, aspartate 38, lysine 43, tyrosine 69, and 83–84 (GA) contribute to the NAD(+) site. Positions 86 and 92 each coordinate substrate. Residues serine 105, 122–124 (ATN), and serine 147 each bind NAD(+). Residue 124-127 (NPVD) participates in substrate binding. 152-155 (DSAR) contributes to the substrate binding site. Histidine 179 serves as the catalytic Proton acceptor. Tyrosine 223 is modified (phosphotyrosine). Substrate is bound at residue threonine 232.

It belongs to the LDH/MDH superfamily. LDH family. In terms of assembly, homotetramer.

The protein localises to the cytoplasm. It catalyses the reaction (S)-lactate + NAD(+) = pyruvate + NADH + H(+). It functions in the pathway fermentation; pyruvate fermentation to lactate; (S)-lactate from pyruvate: step 1/1. Catalyzes the conversion of lactate to pyruvate (Potential). Appears to be the primary factor that allows S.aureus growth during nitrosative stress in both aerobically and anaerobically cultured cells. The polypeptide is L-lactate dehydrogenase 1 (Staphylococcus aureus (strain MRSA252)).